Consider the following 2496-residue polypeptide: Non-reducing polyketide synthase adrD (2496 aa).

The N-terminal acylcarrier protein transacylase domain (SAT) stretch occupies residues 15–254; the sequence is LVFGPQIAEI…HHASHITAVQ (240 aa). Positions 387 to 808 constitute a Ketosynthase family 3 (KS3) domain; sequence ATPIAITGMG…GSNAALVVKQ (422 aa). Catalysis depends on for beta-ketoacyl synthase activity residues Cys552, His687, and His726. The interval 914 to 1223 is malonyl-CoA:ACP transacylase (MAT) domain; sequence LCFGGQNGNE…QSLDLGGPQG (310 aa). Residue Ser1001 is the For acyl/malonyl transferase activity of the active site. Positions 1295–1423 are N-terminal hotdog fold; that stretch reads KEFVQLLTKQ…GEISLHPFGQ (129 aa). Residues 1295 to 1602 form the PKS/mFAS DH domain; the sequence is KEFVQLLTKQ…FTSVSIAGLA (308 aa). The product template (PT) domain stretch occupies residues 1296-1601; that stretch reads EFVQLLTKQP…EFTSVSIAGL (306 aa). His1326 functions as the Proton acceptor; for dehydratase activity in the catalytic mechanism. Residues 1451–1602 are C-terminal hotdog fold; the sequence is ESSGLKGFAV…FTSVSIAGLA (152 aa). Residue Asp1509 is the Proton donor; for dehydratase activity of the active site. The segment covering 1615–1629 has biased composition (basic and acidic residues); the sequence is EKASPDLSLRNDSKV. A disordered region spans residues 1615 to 1645; that stretch reads EKASPDLSLRNDSKVDVNPTPQNTAPVVQPT. Polar residues predominate over residues 1633–1645; the sequence is PTPQNTAPVVQPT. In terms of domain architecture, Carrier spans 1652 to 1726; it reads PGYFVVVQEM…ALVQTIFPDA (75 aa). Ser1686 bears the O-(pantetheine 4'-phosphoryl)serine mark. Residues 1888–2121 form a methyltransferase (CMeT) domain region; it reads QHRSEHHLLK…GFQWVDWTHN (234 aa). Positions 2151–2496 are thioesterase (TE) domain; the sequence is RVMNEETVPY…YEFLRDHVRY (346 aa). Catalysis depends on for thioesterase activity residues Ser2274 and Asp2433.

It catalyses the reaction 3 malonyl-CoA + acetyl-CoA + 2 S-adenosyl-L-methionine = 3,5-dimethylorsellinate + 2 S-adenosyl-L-homocysteine + 3 CO2 + 4 CoA. It participates in secondary metabolite biosynthesis; terpenoid biosynthesis. Functionally, non-reducing polyketide synthase; part of the gene cluster that mediates the biosynthesis of andrastins, meroterpenoid compounds that exhibit inhibitory activity against ras farnesyltransferase, suggesting that they could be promising leads for antitumor agents. The first step of the pathway is the synthesis of 3,5-dimethylorsellinic acid (DMOA) by the polyketide synthase adrD via condensation of one acetyl-CoA starter unit with 3 malonyl-CoA units and 2 methylations. DMAO is then converted to farnesyl-DMAO by the prenyltransferase adrG. The methyltransferase adrK catalyzes the methylation of the carboxyl group of farnesyl-DMAO to farnesyl-DMAO methyl ester which is further converted to epoxyfarnesyl-DMAO methyl ester by the FAD-dependent monooxygenase adrH. The terpene cyclase adrI then catalyzes the carbon skeletal rearrangement to generate the andrastin E, the first compound in the pathway having the andrastin scaffold, with the tetracyclic ring system. The post-cyclization tailoring enzymes adrF, adrE, adrJ, and adrA, are involved in the conversion of andrastin E into andrastin A. The short chain dehydrogenase adrF is responsible for the oxidation of the C-3 a hydroxyl group of andrastin E to yield the corresponding ketone, andrastin D. The ketoreductase adrE stereoselectively reduces the carbonyl moiety to reverse the stereochemistry of the C-3 position to yield andrastin F. The acetyltransferase adrJ is the acetyltransferase that attaches the acetyl group to the C-3 hydroxyl group of andrastin F to yield andrastin C. Finally, the cytochrome P450 monooxygenase adrA catalyzes two sequential oxidation reactions of the C-23 methyl group, to generate the corresponding alcohol andrastin B, and aldehyde andrastin A. This Penicillium rubens (strain ATCC 28089 / DSM 1075 / NRRL 1951 / Wisconsin 54-1255) (Penicillium chrysogenum) protein is Non-reducing polyketide synthase adrD.